We begin with the raw amino-acid sequence, 419 residues long: DNA ligase (419 aa).

The segment at 1–120 (MLNHFPGHCS…ARQKRGAHTN (120 aa)) is NTD. Residues 121–317 (RGMIPPMLVK…NYHSAHLAKL (197 aa)) form an AD domain region. Catalysis depends on Lys-151, which acts as the N6-AMP-lysine intermediate. Residues Lys-151, Glu-203, and Phe-232 each coordinate ATP. Glu-203 serves as a coordination point for a divalent metal cation. Glu-291 lines the a divalent metal cation pocket. Residues Ile-294 and Lys-316 each contribute to the ATP site. Residues 318–419 (KPLLDAEFIL…REPINVLEII (102 aa)) are OB domain.

It belongs to the ATP-dependent DNA ligase family.

It is found in the virion. The enzyme catalyses ATP + (deoxyribonucleotide)n-3'-hydroxyl + 5'-phospho-(deoxyribonucleotide)m = (deoxyribonucleotide)n+m + AMP + diphosphate.. Its function is as follows. Very low-fidelity DNA ligase that seals nicks in double-stranded DNA during DNA repair. Together with the viral repair DNA polymerase X, fills the single nucleotide gaps generated by the AP endonuclease. It is not essential for viral replication and recombination. Displays a very low adenylation activity towards DNA with 3'-dideoxy- or 3'-amino-terminated nicks compared to regular nick DNA. The sequence is that of DNA ligase from African swine fever virus (isolate Tick/South Africa/Pretoriuskop Pr4/1996) (ASFV).